We begin with the raw amino-acid sequence, 222 residues long: N-(5'-phosphoribosyl)anthranilate isomerase (222 aa).

This sequence belongs to the TrpF family.

It carries out the reaction N-(5-phospho-beta-D-ribosyl)anthranilate = 1-(2-carboxyphenylamino)-1-deoxy-D-ribulose 5-phosphate. Its pathway is amino-acid biosynthesis; L-tryptophan biosynthesis; L-tryptophan from chorismate: step 3/5. The chain is N-(5'-phosphoribosyl)anthranilate isomerase from Brevibacillus brevis (strain 47 / JCM 6285 / NBRC 100599).